A 121-amino-acid chain; its full sequence is uncharacterized protein (121 aa).

The 55-residue stretch at 47 to 101 folds into the Cupin type-2 domain; the sequence is SEVPHYHAEHDLTFTVLKGKGELYLEGEKKKLKEGDWAFIPKGAVHFYRNTSELS.

This is an uncharacterized protein from Aquifex aeolicus (strain VF5).